Here is a 289-residue protein sequence, read N- to C-terminus: Rhodopsin (289 aa).

Residues 1–7 (YLVNPAA) are Extracellular-facing. A helical membrane pass occupies residues 8 to 32 (YAAPGAYMFLLILVGFPVNFLTLYV). Topologically, residues 33 to 44 (TLEHKKLRTPLN) are cytoplasmic. A helical transmembrane segment spans residues 45-67 (YILLNLAVADLFMVLGGFTTTMY). The Extracellular portion of the chain corresponds to 68–81 (TSMHGYFVLGRLGC). Residues C81 and C158 are joined by a disulfide bond. The chain crosses the membrane as a helical span at residues 82–104 (NLEGFFATLGGEIALWSLVVLAI). The short motif at 105-107 (ERW) is the 'Ionic lock' involved in activated form stabilization element. Residues 105–123 (ERWIVVCKPISNFRFTEDH) are Cytoplasmic-facing. A helical transmembrane segment spans residues 124 to 144 (AIMGLAFSWVMALTCAVPPLV). The Extracellular portion of the chain corresponds to 145 to 173 (GWSRYIPEGMQCSCGVDYYTRAEGFNNES). Residue N171 is glycosylated (N-linked (GlcNAc...) asparagine). A helical membrane pass occupies residues 174–195 (FVIYMFIVHFLIPLSNNFFCYG). The Cytoplasmic segment spans residues 196–223 (RLLCAVKEAAAAQQESETTQRAEREVSR). A helical membrane pass occupies residues 224 to 245 (MVVMMVVSFLMCWLPYASVAWY). Over 246–257 (IFCNQGSEFGPI) the chain is Extracellular. The helical transmembrane segment at 258–279 (FMTLPAFFAKSSAIYNPLIYIC) threads the bilayer. N6-(retinylidene)lysine is present on K267. The Cytoplasmic segment spans residues 280–289 (MNKHVRHCMI).

It belongs to the G-protein coupled receptor 1 family. Opsin subfamily. In terms of processing, phosphorylated on some or all of the serine and threonine residues present in the C-terminal region. Post-translationally, contains one covalently linked retinal chromophore.

Its subcellular location is the membrane. It localises to the cell projection. It is found in the cilium. The protein localises to the photoreceptor outer segment. Photoreceptor required for image-forming vision at low light intensity. While most salt water fish species use retinal as chromophore, most freshwater fish use 3-dehydroretinal, or a mixture of retinal and 3-dehydroretinal. Light-induced isomerization of 11-cis to all-trans retinal triggers a conformational change that activates signaling via G-proteins. Subsequent receptor phosphorylation mediates displacement of the bound G-protein alpha subunit by arrestin and terminates signaling. The protein is Rhodopsin (rho) of Cottocomephorus grewingkii (Baikal yellowfin).